We begin with the raw amino-acid sequence, 426 residues long: Glutamyl-tRNA(Gln) amidotransferase subunit D (426 aa).

The Asparaginase/glutaminase domain maps to 82 to 413 (KNISILSTGG…KDAKKLICKN (332 aa)). Active-site residues include Thr-92, Thr-168, Asp-169, and Lys-245.

This sequence belongs to the asparaginase 1 family. GatD subfamily. Heterodimer of GatD and GatE.

It catalyses the reaction L-glutamyl-tRNA(Gln) + L-glutamine + ATP + H2O = L-glutaminyl-tRNA(Gln) + L-glutamate + ADP + phosphate + H(+). In terms of biological role, allows the formation of correctly charged Gln-tRNA(Gln) through the transamidation of misacylated Glu-tRNA(Gln) in organisms which lack glutaminyl-tRNA synthetase. The reaction takes place in the presence of glutamine and ATP through an activated gamma-phospho-Glu-tRNA(Gln). The GatDE system is specific for glutamate and does not act on aspartate. The polypeptide is Glutamyl-tRNA(Gln) amidotransferase subunit D (Methanococcus vannielii (strain ATCC 35089 / DSM 1224 / JCM 13029 / OCM 148 / SB)).